The following is a 110-amino-acid chain: uncharacterized protein (110 aa).

Residues 1–20 (MNQQNQKISNPQTPVPTTSE) are compositionally biased toward polar residues. The disordered stretch occupies residues 1-24 (MNQQNQKISNPQTPVPTTSEMNDR).

This is an uncharacterized protein from Bacillus subtilis (strain 168).